The sequence spans 112 residues: Transmembrane protein 14C (112 aa).

4 helical membrane passes run 7-27 (VVPL…GGII), 32-52 (AGSV…SLGA), 62-82 (VWVF…RFYH), and 86-106 (FMPA…VGVS).

It belongs to the TMEM14 family.

The protein localises to the mitochondrion membrane. In terms of biological role, required for normal heme biosynthesis. This chain is Transmembrane protein 14C (TMEM14C), found in Pongo abelii (Sumatran orangutan).